The sequence spans 82 residues: Probable tautomerase XF_1725 (82 aa).

Pro-2 serves as the catalytic Proton acceptor; via imino nitrogen.

This sequence belongs to the 4-oxalocrotonate tautomerase family.

This chain is Probable tautomerase XF_1725, found in Xylella fastidiosa (strain 9a5c).